Here is a 199-residue protein sequence, read N- to C-terminus: Pre T-cell antigen receptor alpha (199 aa).

The first 16 residues, 1-16, serve as a signal peptide directing secretion; that stretch reads MARTWLLLFLGLRCQA. At 17 to 155 the chain is on the extracellular side; sequence LPSGIAGTPF…RQVLRLSVLR (139 aa). Residues cysteine 47 and cysteine 107 are joined by a disulfide bond. Asparagine 67 and asparagine 117 each carry an N-linked (GlcNAc...) asparagine glycan. A disordered region spans residues 117-139; that stretch reads NRSTHPLQLSGEEASTDRTCPQE. Residues 156-176 traverse the membrane as a helical segment; it reads LLLFKLLLLDVFLTCSRLCVL. Residues 177-199 are Cytoplasmic-facing; that stretch reads AGQHLLPPPSSKQAPASTHQSWT.

In terms of assembly, heterodimer with TCRB; disulfide linked. This heterodimer assembles with CD3 proteins into a signaling-competent pre-T-cell receptor complex. Interacts with RHBDD1. In terms of tissue distribution, found in CD45+ but not in the CD45- fetal liver cells.

It is found in the membrane. The protein localises to the cell membrane. Its function is as follows. Component of the pre-T-cell receptor complex (composed of PTCRA, TCRB and the CD3 complex) that has a crucial role in early T-cell development, particularly alpha-beta T cell differentiation. The polypeptide is Pre T-cell antigen receptor alpha (Rattus norvegicus (Rat)).